Reading from the N-terminus, the 903-residue chain is Protein translocase subunit SecA (903 aa).

ATP contacts are provided by residues Gln89, 107–111, and Asp502; that span reads GEGKT. Residues Cys887, Cys889, Cys898, and His899 each coordinate Zn(2+).

It belongs to the SecA family. As to quaternary structure, monomer and homodimer. Part of the essential Sec protein translocation apparatus which comprises SecA, SecYEG and auxiliary proteins SecDF-YajC and YidC. The cofactor is Zn(2+).

Its subcellular location is the cell inner membrane. It is found in the cytoplasm. The enzyme catalyses ATP + H2O + cellular proteinSide 1 = ADP + phosphate + cellular proteinSide 2.. Functionally, part of the Sec protein translocase complex. Interacts with the SecYEG preprotein conducting channel. Has a central role in coupling the hydrolysis of ATP to the transfer of proteins into and across the cell membrane, serving both as a receptor for the preprotein-SecB complex and as an ATP-driven molecular motor driving the stepwise translocation of polypeptide chains across the membrane. In Jannaschia sp. (strain CCS1), this protein is Protein translocase subunit SecA.